The chain runs to 245 residues: High affinity immunoglobulin epsilon receptor subunit alpha (245 aa).

Positions 1–23 are cleaved as a signal peptide; that stretch reads MDTGGSARLCLALVLISLGVMLT. Residues 24 to 204 lie on the Extracellular side of the membrane; it reads ATQKSVVSLD…DYTIEYRWLQ (181 aa). Ig-like domains follow at residues 28–103 and 113–181; these read SVVS…KPVY and LQSS…LNKV. Cysteine 49 and cysteine 91 are joined by a disulfide. Asparagine 52, asparagine 53, asparagine 58, asparagine 65, asparagine 123, asparagine 158, and asparagine 167 each carry an N-linked (GlcNAc...) asparagine glycan. An intrachain disulfide couples cysteine 130 to cysteine 174. Residues 205 to 223 form a helical membrane-spanning segment; it reads LIFPSLAVILFAVDTGLWF. Topologically, residues 224–245 are cytoplasmic; sequence STHKQFESILKIQKTGKGKKKG.

Tetramer of an alpha chain, a beta chain, and two disulfide linked gamma chains. Interacts with IGHE (via CH3 region). As to expression, expressed in leukocytes and pinealocytes at night (at protein level).

The protein localises to the cell membrane. The protein resides in the secreted. Its function is as follows. High-affinity receptor for immunoglobulin epsilon/IgE. Mediates IgE effector functions in myeloid cells. Upon IgE binding and antigen/allergen cross-linking initiates signaling pathways that lead to myeloid cell activation and differentiation. On mast cells, basophils and eosinophils stimulates the secretion of vasoactive amines, lipid mediators and cytokines that contribute to inflammatory response, tissue remodeling and cytotoxicity against microbes. Triggers the immediate hypersensitivity response to allergens as a host defense mechanism against helminth parasites, pathogenic bacteria and venom toxicity. When dysregulated, it can elicit harmful life-threatening allergic and anaphylactic reactions. This Rattus norvegicus (Rat) protein is High affinity immunoglobulin epsilon receptor subunit alpha (Fcer1a).